The following is a 329-amino-acid chain: Biotin synthase (329 aa).

Residues 38–262 form the Radical SAM core domain; that stretch reads NTIQVSTLLS…IMPYSYIRLS (225 aa). Positions 53, 57, and 60 each coordinate [4Fe-4S] cluster. [2Fe-2S] cluster is bound by residues Cys97, Cys128, Cys188, and Arg260.

The protein belongs to the radical SAM superfamily. Biotin synthase family. In terms of assembly, homodimer. Requires [4Fe-4S] cluster as cofactor. [2Fe-2S] cluster serves as cofactor.

The enzyme catalyses (4R,5S)-dethiobiotin + (sulfur carrier)-SH + 2 reduced [2Fe-2S]-[ferredoxin] + 2 S-adenosyl-L-methionine = (sulfur carrier)-H + biotin + 2 5'-deoxyadenosine + 2 L-methionine + 2 oxidized [2Fe-2S]-[ferredoxin]. It participates in cofactor biosynthesis; biotin biosynthesis; biotin from 7,8-diaminononanoate: step 2/2. Its function is as follows. Catalyzes the conversion of dethiobiotin (DTB) to biotin by the insertion of a sulfur atom into dethiobiotin via a radical-based mechanism. The chain is Biotin synthase from Acinetobacter baylyi (strain ATCC 33305 / BD413 / ADP1).